Here is a 340-residue protein sequence, read N- to C-terminus: MPNLENLDWKNLGFSYIKTDFRFIATYKNGSWSQGELVSENALQLSEGSPVLHYGQACFEGLKAYRSQKGKALLFRPLENAKRLQTSCERLLMPKVSEELFLKACAEVIKANQKWLAPYKSGASLYLRPFVIGVGDNLGVKPASEYLFIVFCAPVGAYFKGGIEKGGARFITTAFDRAAPKGTGGVKVGGNYAASLLAHKIATEQGYDDCIYLDPTTHTKIEEVGAANFFGITHDDAFITPHSPSILPSVTRKSLMVLAKEHLKLKVEEREILIDELGAFKEAGACGTAAIITPIKEIAHNNKSYSFEAPGNITKQLYDLLLSIQQGEQEAPKDWIFEVG.

Lys-187 carries the N6-(pyridoxal phosphate)lysine modification.

It belongs to the class-IV pyridoxal-phosphate-dependent aminotransferase family. Requires pyridoxal 5'-phosphate as cofactor.

The enzyme catalyses L-leucine + 2-oxoglutarate = 4-methyl-2-oxopentanoate + L-glutamate. The catalysed reaction is L-isoleucine + 2-oxoglutarate = (S)-3-methyl-2-oxopentanoate + L-glutamate. It carries out the reaction L-valine + 2-oxoglutarate = 3-methyl-2-oxobutanoate + L-glutamate. It functions in the pathway amino-acid biosynthesis; L-isoleucine biosynthesis; L-isoleucine from 2-oxobutanoate: step 4/4. The protein operates within amino-acid biosynthesis; L-leucine biosynthesis; L-leucine from 3-methyl-2-oxobutanoate: step 4/4. Its pathway is amino-acid biosynthesis; L-valine biosynthesis; L-valine from pyruvate: step 4/4. Its function is as follows. Acts on leucine, isoleucine and valine. This chain is Branched-chain-amino-acid aminotransferase (ilvE), found in Helicobacter pylori (strain J99 / ATCC 700824) (Campylobacter pylori J99).